A 326-amino-acid polypeptide reads, in one-letter code: Biotin synthase (326 aa).

One can recognise a Radical SAM core domain in the interval asparagine 51–arginine 278. The [4Fe-4S] cluster site is built by cysteine 66, cysteine 70, and cysteine 73. [2Fe-2S] cluster-binding residues include cysteine 110, cysteine 141, cysteine 201, and arginine 273.

It belongs to the radical SAM superfamily. Biotin synthase family. In terms of assembly, homodimer. Requires [4Fe-4S] cluster as cofactor. [2Fe-2S] cluster serves as cofactor.

The enzyme catalyses (4R,5S)-dethiobiotin + (sulfur carrier)-SH + 2 reduced [2Fe-2S]-[ferredoxin] + 2 S-adenosyl-L-methionine = (sulfur carrier)-H + biotin + 2 5'-deoxyadenosine + 2 L-methionine + 2 oxidized [2Fe-2S]-[ferredoxin]. Its pathway is cofactor biosynthesis; biotin biosynthesis; biotin from 7,8-diaminononanoate: step 2/2. Its function is as follows. Catalyzes the conversion of dethiobiotin (DTB) to biotin by the insertion of a sulfur atom into dethiobiotin via a radical-based mechanism. The polypeptide is Biotin synthase (Azoarcus sp. (strain BH72)).